Here is a 642-residue protein sequence, read N- to C-terminus: Zinc finger protein 14 (642 aa).

One can recognise a KRAB domain in the interval 4–76; sequence VSFEDVAVNF…MVERLCESRK (73 aa). The segment at 77–99 is disordered; the sequence is GSKCGETTSQMPNVNINKETSTG. Positions 81 to 99 are enriched in polar residues; the sequence is GETTSQMPNVNINKETSTG. The C2H2-type 1 zinc-finger motif lies at 103 to 125; it reads HECSFCGKDFMHHSSLNRHMRSH. The C2H2-type 2; degenerate zinc finger occupies 141 to 163; that stretch reads CKRKAVGKTFSYRHCVRKHERTH. Residues 169-191 form a C2H2-type 3 zinc finger; sequence YECKQCGKAFIYYQPFQRHERIH. The C2H2-type 4; atypical zinc finger occupies 197 to 217; the sequence is YECKQCGKTFIYYQSFQKHAH. C2H2-type zinc fingers lie at residues 223–245, 251–273, 279–301, 307–329, 335–357, 363–385, 391–413, 419–441, 447–469, 475–497, 503–525, 531–553, 559–581, 587–609, and 615–637; these read YECKQCGKTFICYQSFQRHERTH, YECKQCGKAFSCPTYFRTHERTH, YKCKECGKAFSFLSSFRRHKRTH, YECKECGKAFFYSASFQAHVITH, YKCKECGKAFNSSNSCRVHERTH, YECKRCGKSFSWSISLRMHERTH, YECKQCHKTFSFSSSLREHETTH, YECKQCGKAFRFSSSLQRHERTH, YECKQCGKAFRCSSYFRIHERSH, YECKQCGKVFIRSSSFRLHERTH, YECKLCGKAFSFSSSLREHEKIH, FECKRCGKAFLRSSQIRLHERTH, YQCKQCGKAFISSSKFRMHERTH, YRCKQCGKAFRFSSSVRIHERSH, and YECKQCGKAFISSSHFRLHERTH.

Belongs to the krueppel C2H2-type zinc-finger protein family.

The protein localises to the nucleus. Its function is as follows. May be involved in transcriptional regulation. The protein is Zinc finger protein 14 (ZNF14) of Macaca fascicularis (Crab-eating macaque).